A 202-amino-acid polypeptide reads, in one-letter code: Recombination protein RecR (202 aa).

A C4-type zinc finger spans residues 56-71; that stretch reads CRVCGNLDSADPCSVC. One can recognise a Toprim domain in the interval 79–179; the sequence is GLICVVESVG…SVTRLAQGIP (101 aa).

It belongs to the RecR family.

Its function is as follows. May play a role in DNA repair. It seems to be involved in an RecBC-independent recombinational process of DNA repair. It may act with RecF and RecO. The polypeptide is Recombination protein RecR (Granulibacter bethesdensis (strain ATCC BAA-1260 / CGDNIH1)).